The following is a 249-amino-acid chain: Type III pantothenate kinase (249 aa).

ATP is bound at residue 6 to 13; it reads DCGNSFIK. Substrate is bound by residues tyrosine 93 and 100–103; that span reads GMDR. Aspartate 102 acts as the Proton acceptor in catalysis. K(+) is bound at residue aspartate 122. Threonine 125 provides a ligand contact to ATP. Threonine 181 provides a ligand contact to substrate.

Belongs to the type III pantothenate kinase family. As to quaternary structure, homodimer. It depends on NH4(+) as a cofactor. K(+) is required as a cofactor.

Its subcellular location is the cytoplasm. It catalyses the reaction (R)-pantothenate + ATP = (R)-4'-phosphopantothenate + ADP + H(+). The protein operates within cofactor biosynthesis; coenzyme A biosynthesis; CoA from (R)-pantothenate: step 1/5. In terms of biological role, catalyzes the phosphorylation of pantothenate (Pan), the first step in CoA biosynthesis. The sequence is that of Type III pantothenate kinase from Pseudomonas putida (strain ATCC 700007 / DSM 6899 / JCM 31910 / BCRC 17059 / LMG 24140 / F1).